Consider the following 98-residue polypeptide: METTKYEITYIIRPDLDDAAKTALVERFDKILTDNGAELINSKDWSKRRFAYEIGGFNEGIYHVITLNATDDKGLNEFDRLAKINDSILRHMIVKRED.

This sequence belongs to the bacterial ribosomal protein bS6 family.

Functionally, binds together with bS18 to 16S ribosomal RNA. This Levilactobacillus brevis (strain ATCC 367 / BCRC 12310 / CIP 105137 / JCM 1170 / LMG 11437 / NCIMB 947 / NCTC 947) (Lactobacillus brevis) protein is Small ribosomal subunit protein bS6.